The sequence spans 728 residues: Phosphoribosylformylglycinamidine synthase subunit PurL (728 aa).

His42 is a catalytic residue. Residues Tyr45 and Lys84 each coordinate ATP. Glu86 contacts Mg(2+). Substrate contacts are provided by residues 87 to 90 (SHNH) and Arg109. Catalysis depends on His88, which acts as the Proton acceptor. Residue Asp110 coordinates Mg(2+). Substrate is bound at residue Gln237. Asp265 provides a ligand contact to Mg(2+). 309-311 (ESQ) contacts substrate. Residues Asp491 and Gly528 each contribute to the ATP site. Asn529 serves as a coordination point for Mg(2+). Ser531 provides a ligand contact to substrate.

The protein belongs to the FGAMS family. As to quaternary structure, monomer. Part of the FGAM synthase complex composed of 1 PurL, 1 PurQ and 2 PurS subunits.

It is found in the cytoplasm. It carries out the reaction N(2)-formyl-N(1)-(5-phospho-beta-D-ribosyl)glycinamide + L-glutamine + ATP + H2O = 2-formamido-N(1)-(5-O-phospho-beta-D-ribosyl)acetamidine + L-glutamate + ADP + phosphate + H(+). It participates in purine metabolism; IMP biosynthesis via de novo pathway; 5-amino-1-(5-phospho-D-ribosyl)imidazole from N(2)-formyl-N(1)-(5-phospho-D-ribosyl)glycinamide: step 1/2. Functionally, part of the phosphoribosylformylglycinamidine synthase complex involved in the purines biosynthetic pathway. Catalyzes the ATP-dependent conversion of formylglycinamide ribonucleotide (FGAR) and glutamine to yield formylglycinamidine ribonucleotide (FGAM) and glutamate. The FGAM synthase complex is composed of three subunits. PurQ produces an ammonia molecule by converting glutamine to glutamate. PurL transfers the ammonia molecule to FGAR to form FGAM in an ATP-dependent manner. PurS interacts with PurQ and PurL and is thought to assist in the transfer of the ammonia molecule from PurQ to PurL. The protein is Phosphoribosylformylglycinamidine synthase subunit PurL of Campylobacter jejuni subsp. jejuni serotype O:23/36 (strain 81-176).